The sequence spans 288 residues: Tryptophan 2,3-dioxygenase (288 aa).

Substrate-binding positions include Phe-57–His-61, Tyr-119, and Arg-123. His-246 lines the heme pocket. Residue Thr-260 coordinates substrate.

Belongs to the tryptophan 2,3-dioxygenase family. As to quaternary structure, homotetramer. Heme is required as a cofactor.

The catalysed reaction is L-tryptophan + O2 = N-formyl-L-kynurenine. It participates in amino-acid degradation; L-tryptophan degradation via kynurenine pathway; L-kynurenine from L-tryptophan: step 1/2. Functionally, heme-dependent dioxygenase that catalyzes the oxidative cleavage of the L-tryptophan (L-Trp) pyrrole ring and converts L-tryptophan to N-formyl-L-kynurenine. Catalyzes the oxidative cleavage of the indole moiety. The polypeptide is Tryptophan 2,3-dioxygenase (Pseudomonas aeruginosa (strain UCBPP-PA14)).